Here is a 143-residue protein sequence, read N- to C-terminus: Large ribosomal subunit protein uL11 (143 aa).

Belongs to the universal ribosomal protein uL11 family. In terms of assembly, part of the ribosomal stalk of the 50S ribosomal subunit. Interacts with L10 and the large rRNA to form the base of the stalk. L10 forms an elongated spine to which L12 dimers bind in a sequential fashion forming a multimeric L10(L12)X complex. One or more lysine residues are methylated.

Forms part of the ribosomal stalk which helps the ribosome interact with GTP-bound translation factors. This chain is Large ribosomal subunit protein uL11, found in Cupriavidus pinatubonensis (strain JMP 134 / LMG 1197) (Cupriavidus necator (strain JMP 134)).